A 212-amino-acid polypeptide reads, in one-letter code: Thiamine-phosphate synthase (212 aa).

38-42 (QLREK) is a 4-amino-2-methyl-5-(diphosphooxymethyl)pyrimidine binding site. Residues Asp71 and Asp90 each coordinate Mg(2+). Lys138 contributes to the 4-amino-2-methyl-5-(diphosphooxymethyl)pyrimidine binding site. Gly166 contributes to the 2-[(2R,5Z)-2-carboxy-4-methylthiazol-5(2H)-ylidene]ethyl phosphate binding site.

The protein belongs to the thiamine-phosphate synthase family. The cofactor is Mg(2+).

It catalyses the reaction 2-[(2R,5Z)-2-carboxy-4-methylthiazol-5(2H)-ylidene]ethyl phosphate + 4-amino-2-methyl-5-(diphosphooxymethyl)pyrimidine + 2 H(+) = thiamine phosphate + CO2 + diphosphate. It carries out the reaction 2-(2-carboxy-4-methylthiazol-5-yl)ethyl phosphate + 4-amino-2-methyl-5-(diphosphooxymethyl)pyrimidine + 2 H(+) = thiamine phosphate + CO2 + diphosphate. The enzyme catalyses 4-methyl-5-(2-phosphooxyethyl)-thiazole + 4-amino-2-methyl-5-(diphosphooxymethyl)pyrimidine + H(+) = thiamine phosphate + diphosphate. Its pathway is cofactor biosynthesis; thiamine diphosphate biosynthesis; thiamine phosphate from 4-amino-2-methyl-5-diphosphomethylpyrimidine and 4-methyl-5-(2-phosphoethyl)-thiazole: step 1/1. Functionally, condenses 4-methyl-5-(beta-hydroxyethyl)thiazole monophosphate (THZ-P) and 2-methyl-4-amino-5-hydroxymethyl pyrimidine pyrophosphate (HMP-PP) to form thiamine monophosphate (TMP). This Chlamydia abortus (strain DSM 27085 / S26/3) (Chlamydophila abortus) protein is Thiamine-phosphate synthase.